Reading from the N-terminus, the 122-residue chain is Large ribosomal subunit protein uL14 (122 aa).

Belongs to the universal ribosomal protein uL14 family. Part of the 50S ribosomal subunit. Forms a cluster with proteins L3 and L19. In the 70S ribosome, L14 and L19 interact and together make contacts with the 16S rRNA in bridges B5 and B8.

Functionally, binds to 23S rRNA. Forms part of two intersubunit bridges in the 70S ribosome. This Pseudomonas paraeruginosa (strain DSM 24068 / PA7) (Pseudomonas aeruginosa (strain PA7)) protein is Large ribosomal subunit protein uL14.